A 303-amino-acid chain; its full sequence is Probable 5-dehydro-4-deoxyglucarate dehydratase (303 aa).

This sequence belongs to the DapA family.

It catalyses the reaction 5-dehydro-4-deoxy-D-glucarate + H(+) = 2,5-dioxopentanoate + CO2 + H2O. It participates in carbohydrate acid metabolism; D-glucarate degradation; 2,5-dioxopentanoate from D-glucarate: step 2/2. This chain is Probable 5-dehydro-4-deoxyglucarate dehydratase, found in Acinetobacter baumannii (strain SDF).